Consider the following 327-residue polypeptide: Protein EMSY-LIKE 1 (327 aa).

An ENT domain is found at 1 to 88 (METQIHQLEQ…HATIQPFDVL (88 aa)). Residues 32–58 (ESLITELRKELRVSDDEHRELLSRVNK) are a coiled coil. Disordered regions lie at residues 206–257 (GHGS…SDDI) and 305–327 (ADTS…MPQG). Residues 214 to 232 (GNRRGQIHGGRGRGPRIHQ) are compositionally biased toward basic residues. Residues 281–306 (LELDKAKKMLKEHEQALIAAIARLAD) are a coiled coil. Serine 308 bears the Phosphoserine mark. Basic and acidic residues predominate over residues 318–327 (YSHDHPMPQG).

As to quaternary structure, isoform 1 interacts with EDM2 in nucleus.

The protein resides in the nucleus. In terms of biological role, probably involved in the regulation of chromatin states. Contributes to RPP7-mediated and basal immunity, especially against Hyaloperonospora arabidopsidis isolate Hiks1. Regulates negatively EDM2-dependent floral transition. The sequence is that of Protein EMSY-LIKE 1 from Arabidopsis thaliana (Mouse-ear cress).